We begin with the raw amino-acid sequence, 101 residues long: Replication restart protein PriB (101 aa).

Residues 1–101 (MTTNSLVLSG…IHAENVELKT (101 aa)) enclose the SSB domain.

This sequence belongs to the PriB family. As to quaternary structure, homodimer. Interacts with PriA and DnaT. Component of the replication restart primosome. Primosome assembly occurs via a 'hand-off' mechanism. PriA binds to replication forks, subsequently PriB then DnaT bind; DnaT then displaces ssDNA to generate the helicase loading substrate.

Its function is as follows. Involved in the restart of stalled replication forks, which reloads the replicative helicase on sites other than the origin of replication; the PriA-PriB pathway is the major replication restart pathway. During primosome assembly it facilitates complex formation between PriA and DnaT on DNA; stabilizes PriA on DNA. Stimulates the DNA unwinding activity of PriA helicase. This chain is Replication restart protein PriB, found in Shewanella putrefaciens (strain CN-32 / ATCC BAA-453).